The sequence spans 169 residues: Pyrophosphate-energized proton pump 1 (169 aa).

3 consecutive transmembrane segments (helical) span residues 45-65 (YVVA…GIAM), 114-134 (VIPS…VLLI), and 141-161 (AFAA…LVAI).

Belongs to the H(+)-translocating pyrophosphatase (TC 3.A.10) family. Homodimer. Requires Mg(2+) as cofactor.

The protein resides in the cell inner membrane. The catalysed reaction is diphosphate + H2O + H(+)(in) = 2 phosphate + 2 H(+)(out). Proton pump that utilizes the energy of pyrophosphate hydrolysis as the driving force for proton movement across the membrane. Generates a proton motive force. This Rhizobium leguminosarum bv. trifolii protein is Pyrophosphate-energized proton pump 1 (hppA1).